Consider the following 268-residue polypeptide: Secreted RxLR effector protein 32 (268 aa).

An N-terminal signal peptide occupies residues 1-21; that stretch reads MRGAYYVAFALLVAASTRTAA. The short motif at 50–71 is the RxLR-dEER element; it reads RILRESPDPKDRLPVYASDEER. Positions 120 to 257 are disordered; the sequence is PKLEIKKSKR…PTPESLGIGG (138 aa). The span at 148 to 161 shows a compositional bias: low complexity; sequence SNSKKSLVSSASAK. The span at 212–224 shows a compositional bias: basic and acidic residues; it reads NLDKNKRPDEAKI.

This sequence belongs to the RxLR effector family.

It is found in the secreted. It localises to the host cell. Its function is as follows. Secreted effector that completely suppresses the host cell death induced by cell death-inducing proteins. The chain is Secreted RxLR effector protein 32 from Plasmopara viticola (Downy mildew of grapevine).